The chain runs to 466 residues: tRNA(Ile)-lysidine synthase (466 aa).

42 to 47 (SGGVDS) provides a ligand contact to ATP.

Belongs to the tRNA(Ile)-lysidine synthase family.

It is found in the cytoplasm. The catalysed reaction is cytidine(34) in tRNA(Ile2) + L-lysine + ATP = lysidine(34) in tRNA(Ile2) + AMP + diphosphate + H(+). Its function is as follows. Ligates lysine onto the cytidine present at position 34 of the AUA codon-specific tRNA(Ile) that contains the anticodon CAU, in an ATP-dependent manner. Cytidine is converted to lysidine, thus changing the amino acid specificity of the tRNA from methionine to isoleucine. The polypeptide is tRNA(Ile)-lysidine synthase (Anaplasma marginale (strain St. Maries)).